We begin with the raw amino-acid sequence, 188 residues long: Elongation factor P (188 aa).

It belongs to the elongation factor P family.

Its subcellular location is the cytoplasm. The protein operates within protein biosynthesis; polypeptide chain elongation. In terms of biological role, involved in peptide bond synthesis. Stimulates efficient translation and peptide-bond synthesis on native or reconstituted 70S ribosomes in vitro. Probably functions indirectly by altering the affinity of the ribosome for aminoacyl-tRNA, thus increasing their reactivity as acceptors for peptidyl transferase. This chain is Elongation factor P, found in Ureaplasma urealyticum serovar 10 (strain ATCC 33699 / Western).